Reading from the N-terminus, the 1135-residue chain is Large proline-rich protein bag6-A (1135 aa).

The Ubiquitin-like domain maps to 7 to 82 (MEVTVKTLDS…HLVERAPPQT (76 aa)). Disordered stretches follow at residues 76–114 (ERAP…RNGN), 194–238 (EQAA…SPSE), 350–407 (TGNG…PHPR), 498–522 (SFQF…VPGA), 552–612 (QGGS…QHLS), 661–698 (PVST…ESLP), 1075–1099 (KATG…EAQG), and 1116–1135 (NESY…RGDP). Low complexity predominate over residues 79–100 (PPQTQPSTGGPSTSSSTSPTSS). The span at 212 to 227 (RETLPQTTQNTDGQSN) shows a compositional bias: polar residues. Low complexity predominate over residues 228 to 237 (TTPTSHPSPS). A compositionally biased stretch (polar residues) spans 367-387 (QPPSTNTSEPQRPNTENQPPS). Low complexity-rich tracts occupy residues 555-600 (SSTS…SVPS) and 663-672 (STAPTQSASQ). The segment covering 673–692 (APPPSSPPPPPAHSSPPPAA) has biased composition (pro residues). Residues 1087 to 1099 (CVRRELDNSEAQG) are compositionally biased toward basic and acidic residues. The span at 1116–1129 (NESYSAQRFPNTQR) shows a compositional bias: polar residues.

As to quaternary structure, component of the bag6/bat3 complex.

It localises to the cytoplasm. The protein resides in the cytosol. Its subcellular location is the nucleus. It is found in the secreted. The protein localises to the extracellular exosome. Functionally, ATP-independent molecular chaperone preventing the aggregation of misfolded and hydrophobic patches-containing proteins. Functions as part of a cytosolic protein quality control complex, the bag6/bat3 complex, which maintains these client proteins in a soluble state and participates in their proper delivery to the endoplasmic reticulum or alternatively can promote their sorting to the proteasome where they undergo degradation. The bag6/bat3 complex is involved in the post-translational delivery of tail-anchored/type II transmembrane proteins to the endoplasmic reticulum membrane. Similarly, the bag6/bat3 complex also functions as a sorting platform for proteins of the secretory pathway that are mislocalized to the cytosol either delivering them to the proteasome for degradation or to the endoplasmic reticulum. The bag6/bat3 complex also plays a role in the endoplasmic reticulum-associated degradation (ERAD), a quality control mechanism that eliminates unwanted proteins of the endoplasmic reticulum through their retrotranslocation to the cytosol and their targeting to the proteasome. It maintains these retrotranslocated proteins in an unfolded yet soluble state condition in the cytosol to ensure their proper delivery to the proteasome. Also required for selective ubiquitin-mediated degradation of defective nascent chain polypeptides by the proteasome. Also involved in endoplasmic reticulum stress-induced pre-emptive quality control, a mechanism that selectively attenuates the translocation of newly synthesized proteins into the endoplasmic reticulum and reroutes them to the cytosol for proteasomal degradation. May ensure the proper degradation of these proteins and thereby protects the endoplasmic reticulum from protein overload upon stress. By stabilizing a large spectrum of proteins, may indirectly affect different biological processes including apoptosis. By controlling the steady-state expression of the IGF1R receptor, indirectly regulates the insulin-like growth factor receptor signaling pathway. When nuclear, may also act as a component of some chromatin regulator complex. The chain is Large proline-rich protein bag6-A from Xenopus laevis (African clawed frog).